Consider the following 319-residue polypeptide: Biotin synthase (319 aa).

The Radical SAM core domain maps to 41 to 267; the sequence is YKGNKVKVCS…TPDIMICGGR (227 aa). [4Fe-4S] cluster contacts are provided by cysteine 59, cysteine 63, and cysteine 66. Position 192 (cysteine 192) interacts with [2Fe-2S] cluster.

Belongs to the radical SAM superfamily. Biotin synthase family. Homodimer. The cofactor is [4Fe-4S] cluster. Requires [2Fe-2S] cluster as cofactor.

It catalyses the reaction (4R,5S)-dethiobiotin + (sulfur carrier)-SH + 2 reduced [2Fe-2S]-[ferredoxin] + 2 S-adenosyl-L-methionine = (sulfur carrier)-H + biotin + 2 5'-deoxyadenosine + 2 L-methionine + 2 oxidized [2Fe-2S]-[ferredoxin]. Its pathway is cofactor biosynthesis; biotin biosynthesis; biotin from 7,8-diaminononanoate: step 2/2. In terms of biological role, catalyzes the conversion of dethiobiotin (DTB) to biotin by the insertion of a sulfur atom into dethiobiotin via a radical-based mechanism. This chain is Biotin synthase, found in Endomicrobium trichonymphae.